A 152-amino-acid polypeptide reads, in one-letter code: Large ribosomal subunit protein bL9 (152 aa).

This sequence belongs to the bacterial ribosomal protein bL9 family.

Its function is as follows. Binds to the 23S rRNA. The chain is Large ribosomal subunit protein bL9 from Crocosphaera subtropica (strain ATCC 51142 / BH68) (Cyanothece sp. (strain ATCC 51142)).